Consider the following 110-residue polypeptide: Cyclin-dependent protein kinase inhibitor SMR8 (110 aa).

In terms of assembly, interacts with CDKA-1 and D-type cyclins. In terms of tissue distribution, expressed in the root vascular tissue.

Probable cyclin-dependent protein kinase (CDK) inhibitor that functions as a repressor of mitosis in the endoreduplication cell cycle. The protein is Cyclin-dependent protein kinase inhibitor SMR8 of Arabidopsis thaliana (Mouse-ear cress).